The primary structure comprises 75 residues: Defensin-like protein (75 aa).

The first 24 residues, 1-24 (MEKKSIAGLCFLFLVLFVAQEVVV), serve as a signal peptide directing secretion. 4 disulfide bridges follow: C31/C75, C42/C63, C48/C69, and C52/C71.

The protein belongs to the DEFL family.

The protein resides in the secreted. Functionally, this protein is required for germination. The sequence is that of Defensin-like protein from Vigna unguiculata (Cowpea).